Consider the following 371-residue polypeptide: 3-isopropylmalate dehydrogenase B (371 aa).

79-93 (GSKVDHIRRGLDGPE) is an NAD(+) binding site. Residues R100, R110, R142, and D229 each coordinate substrate. Residues D229, D254, and D258 each contribute to the Mg(2+) site. 296–308 (GSAPTIAGKNIAN) is an NAD(+) binding site.

The protein belongs to the isocitrate and isopropylmalate dehydrogenases family. In terms of assembly, homodimer. Mg(2+) serves as cofactor. Mn(2+) is required as a cofactor.

The protein localises to the cytoplasm. It carries out the reaction (2R,3S)-3-isopropylmalate + NAD(+) = 4-methyl-2-oxopentanoate + CO2 + NADH. It functions in the pathway amino-acid biosynthesis; L-leucine biosynthesis; L-leucine from 3-methyl-2-oxobutanoate: step 3/4. In terms of biological role, catalyzes the oxidation of 3-carboxy-2-hydroxy-4-methylpentanoate (3-isopropylmalate) to 3-carboxy-4-methyl-2-oxopentanoate. The product decarboxylates to 4-methyl-2 oxopentanoate. The chain is 3-isopropylmalate dehydrogenase B (leu2B) from Aspergillus niger.